A 1943-amino-acid chain; its full sequence is Sickle tail protein homolog (1943 aa).

2 disordered regions span residues 1 to 79 (MEEN…KEIL) and 112 to 177 (QERL…RSTN). Residues 38–47 (AECRRTKERL) are compositionally biased toward basic and acidic residues. Positions 48–62 (SNGNSRGSVSKSSRN) are enriched in polar residues. At Ser169 the chain carries Phosphoserine. Tyr244 is modified (phosphotyrosine). A disordered region spans residues 290 to 331 (ARGDGPGAPRPGSTAHPPHAIPNSPPSTPVPHSMPPSPSRIP). Residues 308–328 (HAIPNSPPSTPVPHSMPPSPS) show a composition bias toward pro residues. O-linked (GlcNAc) serine glycosylation is present at Ser357. Phosphoserine occurs at positions 361 and 365. Tyr393 bears the Phosphotyrosine mark. The tract at residues 456–476 (RKYPDSHLPTLGSKTPPASPH) is disordered. Thr470 bears the Phosphothreonine mark. Ser474 and Ser526 each carry phosphoserine. Coiled-coil stretches lie at residues 557–581 (RETR…QSAL) and 644–685 (MSLL…ELEI). Ser809 carries the phosphoserine modification. The segment at 848-874 (VLKSQEEAAHTSGQPFHSTGAPGDAKS) is disordered. A coiled-coil region spans residues 957 to 985 (SAKNRAVSIEKAEKKWEEKRQNLDHYNGK). Disordered stretches follow at residues 1003-1230 (PNLE…SDAS), 1305-1329 (KTKE…TESS), and 1352-1377 (PKEA…TEEN). Residues Ser1027, Ser1030, Ser1033, and Ser1044 each carry the phosphoserine modification. The span at 1044–1053 (SPPPPPPPPR) shows a compositional bias: pro residues. Basic and acidic residues-rich tracts occupy residues 1155 to 1167 (EPSR…KDTR), 1174 to 1192 (PKEK…KSDV), and 1305 to 1318 (KTKE…DKCH). The segment covering 1368–1377 (SSSSSPTEEN) has biased composition (polar residues). A Phosphoserine modification is found at Ser1461. A coiled-coil region spans residues 1464–1490 (FEECDEELERMMMEEKIEEEEEEENGD). Disordered stretches follow at residues 1481–1572 (EEEE…PKKK), 1606–1660 (EEEE…EIRK), and 1677–1943 (ENTI…KETS). Polar residues-rich tracts occupy residues 1491 to 1501 (SVVQNNNTSQM) and 1512 to 1533 (RTGQ…TRNP). Basic and acidic residues-rich tracts occupy residues 1539–1548 (NRTELNKFSH) and 1612–1625 (GTLK…RFEI). Positions 1643 to 1653 (QPSIESTSPIS) are enriched in polar residues. Positions 1656-1686 (DEIRKNTYRTLDSLEQTIKQLENTISEMSPK) form a coiled coil. Polar residues-rich tracts occupy residues 1691–1706 (TSCS…SSHI) and 1731–1747 (IPSA…QTSR). Position 1739 is a phosphoserine (Ser1739). The segment covering 1763–1775 (KPGKQSKLQDPRQ) has biased composition (basic and acidic residues). The span at 1806–1825 (SPSSGKSSSLPSSSGDSSNL) shows a compositional bias: low complexity. 2 stretches are compositionally biased toward polar residues: residues 1834 to 1843 (SIASNPLSPQ) and 1853 to 1869 (LIPS…SLTH). Ser1841 is subject to Phosphoserine. The segment covering 1892–1905 (SFSSSPPSPASSVS) has biased composition (low complexity). A phosphoserine mark is found at Ser1896, Ser1899, and Ser1902. The span at 1906–1943 (LNQGAKGTRTIHTPSLTSYKAQNGSSSKATPSTAKETS) shows a compositional bias: polar residues.

In terms of assembly, interacts with CPNE4 (via VWFA domain).

It localises to the cytoplasm. Its subcellular location is the cytoskeleton. The protein localises to the microtubule organizing center. It is found in the centrosome. Functionally, required for normal development of intervertebral disks. The protein is Sickle tail protein homolog (KIAA1217) of Homo sapiens (Human).